Reading from the N-terminus, the 343-residue chain is Phosphate acyltransferase (343 aa).

This sequence belongs to the PlsX family. As to quaternary structure, homodimer. Probably interacts with PlsY.

It is found in the cytoplasm. The catalysed reaction is a fatty acyl-[ACP] + phosphate = an acyl phosphate + holo-[ACP]. It participates in lipid metabolism; phospholipid metabolism. In terms of biological role, catalyzes the reversible formation of acyl-phosphate (acyl-PO(4)) from acyl-[acyl-carrier-protein] (acyl-ACP). This enzyme utilizes acyl-ACP as fatty acyl donor, but not acyl-CoA. This chain is Phosphate acyltransferase, found in Coxiella burnetii (strain Dugway 5J108-111).